The chain runs to 320 residues: Holliday junction branch migration complex subunit RuvB (320 aa).

The large ATPase domain (RuvB-L) stretch occupies residues 1–172 (MTANVCLDES…FGIISRLEYY (172 aa)). ATP-binding positions include Arg12, Gly53, Lys56, Thr57, Thr58, 119-121 (EDF), Arg162, Tyr172, and Arg209. Position 57 (Thr57) interacts with Mg(2+). The interval 173 to 243 (TPADLARIVA…LASEALGRME (71 aa)) is small ATPAse domain (RuvB-S). The segment at 246-320 (ESGLDQMDRK…KAYRHLNLLG (75 aa)) is head domain (RuvB-H). Arg301 and Arg306 together coordinate DNA.

This sequence belongs to the RuvB family. Homohexamer. Forms an RuvA(8)-RuvB(12)-Holliday junction (HJ) complex. HJ DNA is sandwiched between 2 RuvA tetramers; dsDNA enters through RuvA and exits via RuvB. An RuvB hexamer assembles on each DNA strand where it exits the tetramer. Each RuvB hexamer is contacted by two RuvA subunits (via domain III) on 2 adjacent RuvB subunits; this complex drives branch migration. In the full resolvosome a probable DNA-RuvA(4)-RuvB(12)-RuvC(2) complex forms which resolves the HJ.

Its subcellular location is the cytoplasm. The enzyme catalyses ATP + H2O = ADP + phosphate + H(+). In terms of biological role, the RuvA-RuvB-RuvC complex processes Holliday junction (HJ) DNA during genetic recombination and DNA repair, while the RuvA-RuvB complex plays an important role in the rescue of blocked DNA replication forks via replication fork reversal (RFR). RuvA specifically binds to HJ cruciform DNA, conferring on it an open structure. The RuvB hexamer acts as an ATP-dependent pump, pulling dsDNA into and through the RuvAB complex. RuvB forms 2 homohexamers on either side of HJ DNA bound by 1 or 2 RuvA tetramers; 4 subunits per hexamer contact DNA at a time. Coordinated motions by a converter formed by DNA-disengaged RuvB subunits stimulates ATP hydrolysis and nucleotide exchange. Immobilization of the converter enables RuvB to convert the ATP-contained energy into a lever motion, pulling 2 nucleotides of DNA out of the RuvA tetramer per ATP hydrolyzed, thus driving DNA branch migration. The RuvB motors rotate together with the DNA substrate, which together with the progressing nucleotide cycle form the mechanistic basis for DNA recombination by continuous HJ branch migration. Branch migration allows RuvC to scan DNA until it finds its consensus sequence, where it cleaves and resolves cruciform DNA. The polypeptide is Holliday junction branch migration complex subunit RuvB (Nitratidesulfovibrio vulgaris (strain ATCC 29579 / DSM 644 / CCUG 34227 / NCIMB 8303 / VKM B-1760 / Hildenborough) (Desulfovibrio vulgaris)).